We begin with the raw amino-acid sequence, 433 residues long: Schlafen-like protein 2 (433 aa).

In terms of domain architecture, B30.2/SPRY spans 1–168; sequence MADTSPRESK…LSVNFGSQPF (168 aa). An SLFN-like fold region spans residues 199–400; sequence EHVVVKLPFA…RRMASNKCVY (202 aa). Catalysis depends on residues Glu211 and Glu216.

It belongs to the Schlafen family. Component of the trimeric PUCH (precursor of 21U RNA 5'-end cleavage holoenzyme) complex; consisting of tofu-1, tofu-2 and either slfl-3 or slfl-4. Within the complex, interacts (via N-terminus) with tofu-1 (via N-terminus); the interaction stabilizes tofu-2 and may form a functional nuclease. Within the complex, interacts (via N-terminus) with slfl-3 (via N-terminus); the presence of tofu-1 is required for this interaction. Mg(2+) is required as a cofactor. In terms of tissue distribution, expressed in the germline.

The protein resides in the cytoplasm. It localises to the mitochondrion. Inhibited by ethylenediaminetetraacetic acid (EDTA). Functionally, component of the trimeric PUCH (precursor of 21U RNA 5'-end cleavage holoenzyme) complex, that acts as an endoribonuclease processing the 5'-end of precursor Piwi-interacting RNAs (piRNAs). The PUCH complex consists of tofu-1, tofu-2 and either slfl-3 or slfl-4, with tofu-2 exhibiting endoribonuclease activity. PUCH-mediated processing strictly requires a 7-methyl-G cap (m7 G-cap) and an uracil at position three (U3). PUCH also exhibits a strict bias for piRNA precursors with an A or G at position 1. Mature piRNA production is enhanced by the interaction of PUCH with the PETISCO complex, which is stabilizing piRNA precursors and allows their processing by PUCH. The polypeptide is Schlafen-like protein 2 (Caenorhabditis elegans).